We begin with the raw amino-acid sequence, 366 residues long: ATP-dependent 6-phosphofructokinase 2 (366 aa).

Residues Gly-15, Lys-78–Asp-79, and Gly-119–Thr-122 each bind ATP. Asp-120 is a binding site for Mg(2+). Substrate is bound by residues Thr-142 to Asp-144, Arg-179, Met-186 to Arg-188, Glu-239, Arg-284, and His-290 to Arg-293. The active-site Proton acceptor is Asp-144.

It belongs to the phosphofructokinase type A (PFKA) family. Mixed-substrate PFK group III subfamily. As to quaternary structure, homodimer or homotetramer. Mg(2+) is required as a cofactor.

It localises to the cytoplasm. The enzyme catalyses beta-D-fructose 6-phosphate + ATP = beta-D-fructose 1,6-bisphosphate + ADP + H(+). It participates in carbohydrate degradation; glycolysis; D-glyceraldehyde 3-phosphate and glycerone phosphate from D-glucose: step 3/4. With respect to regulation, subject to allosteric activation by ADP and other diphosphonucleosides, and inhibition by phosphoenolpyruvate. Functionally, catalyzes the phosphorylation of D-fructose 6-phosphate to fructose 1,6-bisphosphate by ATP, the first committing step of glycolysis. The sequence is that of ATP-dependent 6-phosphofructokinase 2 from Clostridium perfringens (strain 13 / Type A).